We begin with the raw amino-acid sequence, 274 residues long: Kit ligand (274 aa).

Positions 1-25 (MKKTQTWIITCIYLQLLLFNPLVHT) are cleaved as a signal peptide. A Pyrrolidone carboxylic acid modification is found at Gln-26. Over 26 to 215 (QGICSNRVTD…SNSIEDSSLQ (190 aa)) the chain is Extracellular. 2 disulfides stabilise this stretch: Cys-29–Cys-114 and Cys-68–Cys-164. N-linked (GlcNAc...) asparagine glycosylation is found at Asn-90, Asn-145, and Asn-196. A helical transmembrane segment spans residues 216–238 (WAAVALPAFFSLVIGFAFGAFYW). The Cytoplasmic segment spans residues 239-274 (KKKQPNLTRTVENRQINEEDNEISMLQEKEREFQEV).

This sequence belongs to the SCF family. As to quaternary structure, homodimer, non-covalently linked. A soluble form is produced by proteolytic processing of isoform 1 in the extracellular domain.

The protein resides in the cell membrane. The protein localises to the cytoplasm. It localises to the cytoskeleton. It is found in the cell projection. Its subcellular location is the lamellipodium. The protein resides in the filopodium. The protein localises to the secreted. In terms of biological role, stimulates the proliferation of mast cells. Able to augment the proliferation of both myeloid and lymphoid hematopoietic progenitors in bone marrow culture. Also mediates cell-cell adhesion. Acts synergistically with other cytokines, probably interleukins. The sequence is that of Kit ligand (KITLG) from Bos taurus (Bovine).